The primary structure comprises 129 residues: Large ribosomal subunit protein bL12 (129 aa).

Belongs to the bacterial ribosomal protein bL12 family. In terms of assembly, homodimer. Part of the ribosomal stalk of the 50S ribosomal subunit. Forms a multimeric L10(L12)X complex, where L10 forms an elongated spine to which 2 to 4 L12 dimers bind in a sequential fashion. Binds GTP-bound translation factors.

Forms part of the ribosomal stalk which helps the ribosome interact with GTP-bound translation factors. Is thus essential for accurate translation. This is Large ribosomal subunit protein bL12 from Pelotomaculum thermopropionicum (strain DSM 13744 / JCM 10971 / SI).